We begin with the raw amino-acid sequence, 557 residues long: Urocanate hydratase (557 aa).

NAD(+) is bound by residues 53 to 54 (GG), Gln131, 177 to 179 (GMG), Glu197, Arg202, 243 to 244 (NA), 264 to 268 (QTSAH), 274 to 275 (YL), and Tyr323. Cys411 is an active-site residue. Gly493 provides a ligand contact to NAD(+).

Belongs to the urocanase family. Requires NAD(+) as cofactor.

The protein resides in the cytoplasm. It carries out the reaction 4-imidazolone-5-propanoate = trans-urocanate + H2O. The protein operates within amino-acid degradation; L-histidine degradation into L-glutamate; N-formimidoyl-L-glutamate from L-histidine: step 2/3. Its function is as follows. Catalyzes the conversion of urocanate to 4-imidazolone-5-propionate. In Pseudomonas putida (strain ATCC 700007 / DSM 6899 / JCM 31910 / BCRC 17059 / LMG 24140 / F1), this protein is Urocanate hydratase.